We begin with the raw amino-acid sequence, 464 residues long: Zinc transporter 6-A (464 aa).

Over 1 to 33 (MGTIYLFRKTQRSLLGKLAQEFRLVTADRRSWK) the chain is Cytoplasmic. The chain crosses the membrane as a helical span at residues 34 to 54 (ILLFGAINVVCTAFLLTWCSS). Residues 55–64 (TNSMALTAYT) are Extracellular-facing. A helical membrane pass occupies residues 65-85 (YLTIFDLFSLITSLISYWVTM). The Cytoplasmic portion of the chain corresponds to 86-98 (KKPSPTYSFGFER). Residues 99 to 119 (FEVLAVFASTVLAQLGALFIL) traverse the membrane as a helical segment. Residues 120–134 (KESAERFIEQPEIHT) lie on the Extracellular side of the membrane. The chain crosses the membrane as a helical span at residues 135 to 155 (GRLLVGTFVALFFNLFTMLSI). The Cytoplasmic segment spans residues 156–200 (RNKPFAYVSDAASTSWLQEHVADLSRSLCGIIPGLSSIFLPRMNP). Residues 201 to 221 (FVLIDIAGALALCITYMLIEI) traverse the membrane as a helical segment. Residues 222–223 (NN) are Extracellular-facing. A helical transmembrane segment spans residues 224-244 (YFAVDTASAVAIAVMTFGTMY). Topologically, residues 245 to 464 (PMSVYSGKVL…TPGQFTQFRQ (220 aa)) are cytoplasmic.

The protein belongs to the cation diffusion facilitator (CDF) transporter (TC 2.A.4) family. SLC30A subfamily. In terms of assembly, heterodimer with SLC30A5; form a functional zinc ion transmembrane transporter.

It is found in the golgi apparatus. The protein resides in the trans-Golgi network membrane. In terms of biological role, has probably no intrinsic transporter activity but together with SLC30A5 forms a functional zinc ion:proton antiporter heterodimer, mediating zinc entry into the lumen of organelles along the secretory pathway. As part of that zinc ion:proton antiporter, contributes to zinc ion homeostasis within the early secretory pathway and regulates the activation and folding of enzymes like alkaline phosphatases and enzymes involved in phosphatidylinositol glycan anchor biosynthesis. The protein is Zinc transporter 6-A (slc30a6-a) of Xenopus laevis (African clawed frog).